A 240-amino-acid polypeptide reads, in one-letter code: 2,3,4,5-tetrahydropyridine-2,6-dicarboxylate N-acetyltransferase (240 aa).

This sequence belongs to the transferase hexapeptide repeat family. DapH subfamily.

The catalysed reaction is (S)-2,3,4,5-tetrahydrodipicolinate + acetyl-CoA + H2O = L-2-acetamido-6-oxoheptanedioate + CoA. It participates in amino-acid biosynthesis; L-lysine biosynthesis via DAP pathway; LL-2,6-diaminopimelate from (S)-tetrahydrodipicolinate (acetylase route): step 1/3. Its function is as follows. Catalyzes the transfer of an acetyl group from acetyl-CoA to tetrahydrodipicolinate. The sequence is that of 2,3,4,5-tetrahydropyridine-2,6-dicarboxylate N-acetyltransferase from Staphylococcus epidermidis (strain ATCC 12228 / FDA PCI 1200).